A 450-amino-acid chain; its full sequence is Tubulin alpha-2 chain (450 aa).

Residues glutamine 11, glutamate 71, glycine 144, threonine 145, threonine 179, asparagine 206, and asparagine 228 each coordinate GTP. Glutamate 71 contacts Mg(2+). The active site involves glutamate 254. At threonine 349 the chain carries Phosphothreonine. Residues lysine 430–tyrosine 450 are disordered. Residues aspartate 431–tyrosine 450 show a composition bias toward acidic residues.

Belongs to the tubulin family. Dimer of alpha and beta chains. A typical microtubule is a hollow water-filled tube with an outer diameter of 25 nm and an inner diameter of 15 nM. Alpha-beta heterodimers associate head-to-tail to form protofilaments running lengthwise along the microtubule wall with the beta-tubulin subunit facing the microtubule plus end conferring a structural polarity. Microtubules usually have 13 protofilaments but different protofilament numbers can be found in some organisms and specialized cells. Mg(2+) is required as a cofactor. Post-translationally, undergoes a tyrosination/detyrosination cycle, the cyclic removal and re-addition of a C-terminal tyrosine residue by the enzymes tubulin tyrosine carboxypeptidase (TTCP) and tubulin tyrosine ligase (TTL), respectively. Acetylation of alpha chains at Lys-40 stabilizes microtubules and affects affinity and processivity of microtubule motors. This modification has a role in multiple cellular functions, ranging from cell motility, cell cycle progression or cell differentiation to intracellular trafficking and signaling.

Its subcellular location is the cytoplasm. It localises to the cytoskeleton. It catalyses the reaction GTP + H2O = GDP + phosphate + H(+). Its function is as follows. Tubulin is the major constituent of microtubules, a cylinder consisting of laterally associated linear protofilaments composed of alpha- and beta-tubulin heterodimers. Microtubules grow by the addition of GTP-tubulin dimers to the microtubule end, where a stabilizing cap forms. Below the cap, tubulin dimers are in GDP-bound state, owing to GTPase activity of alpha-tubulin. The chain is Tubulin alpha-2 chain (TUBA2) from Arabidopsis thaliana (Mouse-ear cress).